Here is a 433-residue protein sequence, read N- to C-terminus: MKALTEIFGKLLEKIRGVDYIDEATLQELSREIQRTLLKADVPLDLVKSFTENAVKRIKEEKPPAGIPPREYLIYVLYEELVKLLGGEQPAEFKPTKKPYIVLLLGVEGSGKTTTAAKLAKYLAKRGYKVGLVETDTIRPAAFDQLRQLAEKIGVPFYGERDGKDAVEIAKRGVQNFKNMDVIIVDTAGRHRNEEALLKEVRAIYDAVSPDEVVLVIDATVGKMAAAQAEAFMKYLPIHSVIITKMDSTARGGGALAAVAKTGAKVKFIGVGEDVDEFEQFSPRKFVARVLGMGDLDTLLEKIKAVFEEEEVLEEIESGRLDLLTFKKQIDSLLKLGPLSKVFQLLPGNLAAKISEEQIELSQRNLKKWRAILSSMTLEELKNPEILNASRIRRIALGAGVAPKDVKEMLTVYENLRKMSKTLRRQLRLRMAK.

Residues 106–113 (GVEGSGKT), 186–190 (DTAGR), and 244–247 (TKMD) each bind GTP.

Belongs to the GTP-binding SRP family. SRP54 subfamily. In terms of assembly, part of the signal recognition particle protein translocation system, which is composed of SRP and FtsY. Archaeal SRP consists of a 7S RNA molecule of 300 nucleotides and two protein subunits: SRP54 and SRP19.

Its subcellular location is the cytoplasm. It carries out the reaction GTP + H2O = GDP + phosphate + H(+). Functionally, involved in targeting and insertion of nascent membrane proteins into the cytoplasmic membrane. Binds to the hydrophobic signal sequence of the ribosome-nascent chain (RNC) as it emerges from the ribosomes. The SRP-RNC complex is then targeted to the cytoplasmic membrane where it interacts with the SRP receptor FtsY. The sequence is that of Signal recognition particle 54 kDa protein from Pyrobaculum aerophilum (strain ATCC 51768 / DSM 7523 / JCM 9630 / CIP 104966 / NBRC 100827 / IM2).